We begin with the raw amino-acid sequence, 170 residues long: Photosystem II extrinsic protein V (170 aa).

A signal peptide spans 1-33 (MASLFSTLQRSLKGLLILVPVLIGLVLASPAEA). Cysteine 70, cysteine 73, histidine 74, and methionine 137 together coordinate heme c.

It belongs to the cytochrome c family. PsbV subfamily. As to quaternary structure, PSII is composed of 1 copy each of membrane proteins PsbA, PsbB, PsbC, PsbD, PsbE, PsbF, PsbH, PsbI, PsbJ, PsbK, PsbL, PsbM, PsbT, PsbX, PsbY, PsbZ, Psb30/Ycf12, peripheral proteins PsbO, CyanoQ (PsbQ), PsbU, PsbV and a large number of cofactors. It forms dimeric complexes. The cofactor is heme c.

The protein localises to the cellular thylakoid membrane. In terms of biological role, one of the extrinsic, lumenal subunits of photosystem II (PSII). PSII is a light-driven water plastoquinone oxidoreductase, using light energy to abstract electrons from H(2)O, generating a proton gradient subsequently used for ATP formation. The extrinsic proteins stabilize the structure of photosystem II oxygen-evolving complex (OEC), the ion environment of oxygen evolution and protect the OEC against heat-induced inactivation. Low-potential cytochrome c that plays a role in the OEC of PSII. The sequence is that of Photosystem II extrinsic protein V from Parasynechococcus marenigrum (strain WH8102).